The primary structure comprises 177 residues: Cytochrome c-type biogenesis protein CcmE (177 aa).

The Cytoplasmic portion of the chain corresponds to 1-8 (MNPRRKSR). Residues 9-29 (LKVVMAVLSGLAVAVGLTLYA) traverse the membrane as a helical; Signal-anchor for type II membrane protein segment. The Periplasmic portion of the chain corresponds to 30 to 177 (LSQNIDLFYT…QISQPFGENK (148 aa)). Residues His-131 and Tyr-135 each coordinate heme. Positions 134 to 177 (NYMPPELGDQMKKQHQPMGISEADLKGKSERDATQISQPFGENK) are disordered. Over residues 156–166 (ADLKGKSERDA) the composition is skewed to basic and acidic residues. Positions 167–177 (TQISQPFGENK) are enriched in polar residues.

This sequence belongs to the CcmE/CycJ family.

Its subcellular location is the cell inner membrane. Functionally, heme chaperone required for the biogenesis of c-type cytochromes. Transiently binds heme delivered by CcmC and transfers the heme to apo-cytochromes in a process facilitated by CcmF and CcmH. In Glaesserella parasuis serovar 5 (strain SH0165) (Haemophilus parasuis), this protein is Cytochrome c-type biogenesis protein CcmE.